The chain runs to 360 residues: Phosphoserine aminotransferase (360 aa).

Residue Arg-41 coordinates L-glutamate. Pyridoxal 5'-phosphate contacts are provided by Trp-101, Thr-152, Asp-172, and Gln-195. Residue Lys-196 is modified to N6-(pyridoxal phosphate)lysine. Asn-237–Thr-238 provides a ligand contact to pyridoxal 5'-phosphate.

The protein belongs to the class-V pyridoxal-phosphate-dependent aminotransferase family. SerC subfamily. In terms of assembly, homodimer. Pyridoxal 5'-phosphate serves as cofactor.

The protein localises to the cytoplasm. It carries out the reaction O-phospho-L-serine + 2-oxoglutarate = 3-phosphooxypyruvate + L-glutamate. It catalyses the reaction 4-(phosphooxy)-L-threonine + 2-oxoglutarate = (R)-3-hydroxy-2-oxo-4-phosphooxybutanoate + L-glutamate. The protein operates within amino-acid biosynthesis; L-serine biosynthesis; L-serine from 3-phospho-D-glycerate: step 2/3. It functions in the pathway cofactor biosynthesis; pyridoxine 5'-phosphate biosynthesis; pyridoxine 5'-phosphate from D-erythrose 4-phosphate: step 3/5. Catalyzes the reversible conversion of 3-phosphohydroxypyruvate to phosphoserine and of 3-hydroxy-2-oxo-4-phosphonooxybutanoate to phosphohydroxythreonine. This chain is Phosphoserine aminotransferase, found in Paraburkholderia phytofirmans (strain DSM 17436 / LMG 22146 / PsJN) (Burkholderia phytofirmans).